A 158-amino-acid polypeptide reads, in one-letter code: NAD(P)H-quinone oxidoreductase subunit J, chloroplastic (158 aa).

Belongs to the complex I 30 kDa subunit family. As to quaternary structure, NDH is composed of at least 16 different subunits, 5 of which are encoded in the nucleus.

Its subcellular location is the plastid. It is found in the chloroplast thylakoid membrane. The enzyme catalyses a plastoquinone + NADH + (n+1) H(+)(in) = a plastoquinol + NAD(+) + n H(+)(out). The catalysed reaction is a plastoquinone + NADPH + (n+1) H(+)(in) = a plastoquinol + NADP(+) + n H(+)(out). Functionally, NDH shuttles electrons from NAD(P)H:plastoquinone, via FMN and iron-sulfur (Fe-S) centers, to quinones in the photosynthetic chain and possibly in a chloroplast respiratory chain. The immediate electron acceptor for the enzyme in this species is believed to be plastoquinone. Couples the redox reaction to proton translocation, and thus conserves the redox energy in a proton gradient. This chain is NAD(P)H-quinone oxidoreductase subunit J, chloroplastic, found in Psilotum nudum (Whisk fern).